The following is a 158-amino-acid chain: MGHFTFTGLCLLAMFLSLRGAECYTCPIDWLPKNGLCYKVFSKHKTWFDAEKYCRKFKPGCHLASLHSNADAVEFSEYISDYLTGRGHVWIGLRDTKKKYIWEWTDRSRTDFLPWRKNQPDHFNNNEFCVEIVNFTGYLQWNDDNCAALRPFLCQCKY.

Residues 1-23 (MGHFTFTGLCLLAMFLSLRGAEC) form the signal peptide. Intrachain disulfides connect Cys26/Cys37, Cys54/Cys154, Cys61/Cys156, and Cys129/Cys146. A C-type lectin domain is found at 33–155 (KNGLCYKVFS…CAALRPFLCQ (123 aa)). Gln119, Asp121, and Glu127 together coordinate Ca(2+). The short motif at 119–121 (QPD) is the Galactose-binding element. A glycan (N-linked (GlcNAc...) asparagine) is linked at Asn134. 2 residues coordinate Ca(2+): Asn142 and Asp143.

This sequence belongs to the true venom lectin family. As to quaternary structure, homodimer; non-covalently linked. Expressed by the venom gland.

It is found in the secreted. Its function is as follows. Recombinant C-type lectin BML-1 is able to agglutinate erythrocytes. May be a calcium-dependent lectin. The chain is C-type lectin BML-1 from Bungarus multicinctus (Many-banded krait).